A 113-amino-acid chain; its full sequence is UPF0482 protein YnfB (113 aa).

The first 28 residues, M1–A28, serve as a signal peptide directing secretion.

This sequence belongs to the UPF0482 family.

The protein is UPF0482 protein YnfB of Escherichia fergusonii (strain ATCC 35469 / DSM 13698 / CCUG 18766 / IAM 14443 / JCM 21226 / LMG 7866 / NBRC 102419 / NCTC 12128 / CDC 0568-73).